Reading from the N-terminus, the 296-residue chain is tRNA pseudouridine synthase B (296 aa).

Asp38 (nucleophile) is an active-site residue.

The protein belongs to the pseudouridine synthase TruB family. Type 1 subfamily.

It catalyses the reaction uridine(55) in tRNA = pseudouridine(55) in tRNA. Functionally, responsible for synthesis of pseudouridine from uracil-55 in the psi GC loop of transfer RNAs. The sequence is that of tRNA pseudouridine synthase B from Synechocystis sp. (strain ATCC 27184 / PCC 6803 / Kazusa).